Here is a 146-residue protein sequence, read N- to C-terminus: Putative pre-16S rRNA nuclease (146 aa).

It belongs to the YqgF nuclease family.

The protein localises to the cytoplasm. Its function is as follows. Could be a nuclease involved in processing of the 5'-end of pre-16S rRNA. The sequence is that of Putative pre-16S rRNA nuclease from Pseudomonas syringae pv. tomato (strain ATCC BAA-871 / DC3000).